A 233-amino-acid chain; its full sequence is Uracil-DNA glycosylase (233 aa).

Asp-70 (proton acceptor) is an active-site residue.

This sequence belongs to the uracil-DNA glycosylase (UDG) superfamily. UNG family.

It localises to the cytoplasm. The enzyme catalyses Hydrolyzes single-stranded DNA or mismatched double-stranded DNA and polynucleotides, releasing free uracil.. Functionally, excises uracil residues from the DNA which can arise as a result of misincorporation of dUMP residues by DNA polymerase or due to deamination of cytosine. The polypeptide is Uracil-DNA glycosylase (Helicobacter pylori (strain HPAG1)).